Consider the following 252-residue polypeptide: Glucosamine-6-phosphate deaminase (252 aa).

Asp67 functions as the Proton acceptor; for enolization step in the catalytic mechanism. The active-site For ring-opening step is Asn137. The active-site Proton acceptor; for ring-opening step is His139. Glu144 serves as the catalytic For ring-opening step.

This sequence belongs to the glucosamine/galactosamine-6-phosphate isomerase family. NagB subfamily.

The catalysed reaction is alpha-D-glucosamine 6-phosphate + H2O = beta-D-fructose 6-phosphate + NH4(+). It functions in the pathway amino-sugar metabolism; N-acetylneuraminate degradation; D-fructose 6-phosphate from N-acetylneuraminate: step 5/5. Its function is as follows. Catalyzes the reversible isomerization-deamination of glucosamine 6-phosphate (GlcN6P) to form fructose 6-phosphate (Fru6P) and ammonium ion. In Staphylococcus aureus (strain bovine RF122 / ET3-1), this protein is Glucosamine-6-phosphate deaminase.